We begin with the raw amino-acid sequence, 244 residues long: Phosphoadenosine 5'-phosphosulfate reductase (244 aa).

Cysteine 239 serves as the catalytic Nucleophile; cysteine thiosulfonate intermediate.

Belongs to the PAPS reductase family. CysH subfamily.

Its subcellular location is the cytoplasm. It catalyses the reaction [thioredoxin]-disulfide + sulfite + adenosine 3',5'-bisphosphate + 2 H(+) = [thioredoxin]-dithiol + 3'-phosphoadenylyl sulfate. It participates in sulfur metabolism; hydrogen sulfide biosynthesis; sulfite from sulfate: step 3/3. Functionally, catalyzes the formation of sulfite from phosphoadenosine 5'-phosphosulfate (PAPS) using thioredoxin as an electron donor. This chain is Phosphoadenosine 5'-phosphosulfate reductase, found in Shigella dysenteriae serotype 1 (strain Sd197).